The sequence spans 663 residues: UvrABC system protein B (663 aa).

Residues 31 to 188 (DNIEGGEKAQ…NDLVDIQFER (158 aa)) form the Helicase ATP-binding domain. 44–51 (GATGTGKT) provides a ligand contact to ATP. The Beta-hairpin motif lies at 97 to 120 (YYDYYQPEAYVPSSDTYIEKDSSV). One can recognise a Helicase C-terminal domain in the interval 435–601 (QMDDLLGEIN…TIKKDIRDLI (167 aa)). Residues 627-662 (QEAIKKLQKQMQEAAELLDFELAAQIRDMVLELKAM) enclose the UVR domain.

This sequence belongs to the UvrB family. As to quaternary structure, forms a heterotetramer with UvrA during the search for lesions. Interacts with UvrC in an incision complex.

It is found in the cytoplasm. Functionally, the UvrABC repair system catalyzes the recognition and processing of DNA lesions. A damage recognition complex composed of 2 UvrA and 2 UvrB subunits scans DNA for abnormalities. Upon binding of the UvrA(2)B(2) complex to a putative damaged site, the DNA wraps around one UvrB monomer. DNA wrap is dependent on ATP binding by UvrB and probably causes local melting of the DNA helix, facilitating insertion of UvrB beta-hairpin between the DNA strands. Then UvrB probes one DNA strand for the presence of a lesion. If a lesion is found the UvrA subunits dissociate and the UvrB-DNA preincision complex is formed. This complex is subsequently bound by UvrC and the second UvrB is released. If no lesion is found, the DNA wraps around the other UvrB subunit that will check the other stand for damage. The protein is UvrABC system protein B of Streptococcus mutans serotype c (strain ATCC 700610 / UA159).